The following is a 375-amino-acid chain: Methylthioribose-1-phosphate isomerase (375 aa).

The Proton donor role is filled by D257.

It belongs to the eIF-2B alpha/beta/delta subunits family. MtnA subfamily.

The protein resides in the cytoplasm. The protein localises to the nucleus. It catalyses the reaction 5-(methylsulfanyl)-alpha-D-ribose 1-phosphate = 5-(methylsulfanyl)-D-ribulose 1-phosphate. The protein operates within amino-acid biosynthesis; L-methionine biosynthesis via salvage pathway; L-methionine from S-methyl-5-thio-alpha-D-ribose 1-phosphate: step 1/6. Functionally, catalyzes the interconversion of methylthioribose-1-phosphate (MTR-1-P) into methylthioribulose-1-phosphate (MTRu-1-P). The sequence is that of Methylthioribose-1-phosphate isomerase from Leishmania major.